The following is a 399-amino-acid chain: Elongation factor Tu (399 aa).

The region spanning K10–V209 is the tr-type G domain. The tract at residues G19–T26 is G1. G19 to T26 lines the GTP pocket. T26 contacts Mg(2+). The tract at residues G60 to A64 is G2. The G3 stretch occupies residues D81–G84. GTP is bound by residues D81–H85 and N136–D139. The G4 stretch occupies residues N136–D139. Positions S174–L176 are G5.

The protein belongs to the TRAFAC class translation factor GTPase superfamily. Classic translation factor GTPase family. EF-Tu/EF-1A subfamily. In terms of assembly, monomer.

Its subcellular location is the cytoplasm. The catalysed reaction is GTP + H2O = GDP + phosphate + H(+). GTP hydrolase that promotes the GTP-dependent binding of aminoacyl-tRNA to the A-site of ribosomes during protein biosynthesis. This Helicobacter acinonychis (strain Sheeba) protein is Elongation factor Tu.